A 61-amino-acid polypeptide reads, in one-letter code: Large ribosomal subunit protein bL32 (61 aa).

A compositionally biased stretch (basic residues) spans 1–16; that stretch reads MAVPKRKTSPSKRGMR. The disordered stretch occupies residues 1–39; sequence MAVPKRKTSPSKRGMRRSADALKAPTYIEDKNSGELRRP. A compositionally biased stretch (basic and acidic residues) spans 28–39; the sequence is IEDKNSGELRRP.

Belongs to the bacterial ribosomal protein bL32 family.

This chain is Large ribosomal subunit protein bL32, found in Rhizobium meliloti (strain 1021) (Ensifer meliloti).